The sequence spans 453 residues: Odorant receptor 83a (453 aa).

The Cytoplasmic segment spans residues 1–28; that stretch reads MKSTFKEERIKDDSKRRDLFVFVRQTMC. A helical transmembrane segment spans residues 29 to 49; sequence IAAMYPFGYYVNGSGVLAVLV. The Extracellular segment spans residues 50 to 85; that stretch reads RFCDLTYELFNYFVSVHIAGLYICTIYINYGQGDLD. Residues 86–106 form a helical membrane-spanning segment; that stretch reads FFVNCLIQTIIYLWTIAMKLY. Residues 107–148 are Cytoplasmic-facing; that stretch reads FRRFRPGLLNTILSNINDEYETRSAVGFSFVTMAGSYRMSKL. The helical transmembrane segment at 149-169 threads the bilayer; that stretch reads WIKTYVYCCYIGTIFWLALPI. The Extracellular segment spans residues 170–203; the sequence is AYRDRSLPLACWYPFDYTQPGVYEVVFLLQAMGQ. A helical transmembrane segment spans residues 204–224; that stretch reads IQVAASFASSSGLHMVLCVLI. Over 225–322 the chain is Cytoplasmic; the sequence is SGQYDVLFCS…ALKKIESFYS (98 aa). Residues 323–343 traverse the membrane as a helical segment; that stretch reads PIWFVKIGEVTFLMCLVAFVS. The Extracellular segment spans residues 344–359; sequence TKSTAANSFMRMVSLG. A helical membrane pass occupies residues 360–380; sequence QYLLLVLYELFIICYFADIVF. At 381-408 the chain is on the cytoplasmic side; the sequence is QNSQRCGEALWRSPWQRHLKDVRSDYMF. Residues 409-429 traverse the membrane as a helical segment; that stretch reads FMLNSRRQFQLTAGKISNLNV. The Extracellular segment spans residues 430–453; that stretch reads DRFRGTITTAFSFLTLLQKMDARE.

The protein belongs to the insect chemoreceptor superfamily. Heteromeric odorant receptor channel (TC 1.A.69) family. Or2a subfamily. In terms of assembly, interacts with Orco. Complexes exist early in the endomembrane system in olfactory sensory neurons (OSNs), coupling these complexes to the conserved ciliary trafficking pathway.

It localises to the cell membrane. Odorant receptor which mediates acceptance or avoidance behavior, depending on its substrates. The odorant receptor repertoire encodes a large collection of odor stimuli that vary widely in identity, intensity, and duration. May form a complex with Orco to form odorant-sensing units, providing sensitive and prolonged odorant signaling and calcium permeability. Involved in the behavioral responses to pentanol, ethyl acetate, and propyl acetate. In Drosophila melanogaster (Fruit fly), this protein is Odorant receptor 83a (Or83a).